A 339-amino-acid chain; its full sequence is 2-oxoisovalerate dehydrogenase subunit beta (339 aa).

As to quaternary structure, heterodimer of an alpha and a beta chain. It depends on thiamine diphosphate as a cofactor.

The enzyme catalyses N(6)-[(R)-lipoyl]-L-lysyl-[protein] + 3-methyl-2-oxobutanoate + H(+) = N(6)-[(R)-S(8)-2-methylpropanoyldihydrolipoyl]-L-lysyl-[protein] + CO2. The branched-chain alpha-keto dehydrogenase complex catalyzes the overall conversion of alpha-keto acids to acyl-CoA and CO(2). It contains multiple copies of three enzymatic components: branched-chain alpha-keto acid decarboxylase (E1), lipoamide acyltransferase (E2) and lipoamide dehydrogenase (E3). This is 2-oxoisovalerate dehydrogenase subunit beta (bkdA2) from Pseudomonas putida (Arthrobacter siderocapsulatus).